We begin with the raw amino-acid sequence, 418 residues long: Hydroxysteroid dehydrogenase-like protein 2 (418 aa).

NADP(+) is bound by residues 17–23, lysine 42, and aspartate 74; that span reads GASRGIG. The residue at position 42 (lysine 42) is an N6-(2-hydroxyisobutyryl)lysine. Position 116 is an N6-acetyllysine (lysine 116). Residue tyrosine 168 is the Proton acceptor of the active site. Lysine 172 lines the NADP(+) pocket. The SCP2 domain occupies 306–415; sequence RSGAVEETFR…KLEKLMNQMN (110 aa). At lysine 318 the chain carries N6-succinyllysine.

This sequence belongs to the short-chain dehydrogenases/reductases (SDR) family.

The protein localises to the peroxisome. The protein resides in the mitochondrion. In terms of biological role, has apparently no steroid dehydrogenase activity. Controls bile acid (BA) and lipid metabolism in response to nutritional cues. The polypeptide is Hydroxysteroid dehydrogenase-like protein 2 (HSDL2) (Bos taurus (Bovine)).